Consider the following 346-residue polypeptide: Putative aquaporin-7B (346 aa).

At 1 to 40 the chain is on the cytoplasmic side; that stretch reads MVQASGHRRSTRGSKMVSWSVIAKIQEIWCEEDERKMVRE. The chain crosses the membrane as a helical span at residues 41–58; the sequence is FLAEFMSTYVMMVFGLGS. Topologically, residues 59 to 71 are extracellular; the sequence is VAHMVLNKTYGSY. A helical membrane pass occupies residues 72 to 89; the sequence is LGVNLGFGFGVTMGVHVA. Topologically, residues 90–93 are cytoplasmic; sequence GRIS. Residues 94-107 constitute an intramembrane region (discontinuously helical); it reads GAHMNAAVTFTNCA. The NPA 1 signature appears at 98–100; the sequence is NAA. Residues 108 to 115 lie on the Cytoplasmic side of the membrane; that stretch reads LGRVPWRK. The helical transmembrane segment at 116–136 threads the bilayer; sequence FPVHVLGQFLGSFLAAATIYS. The Extracellular segment spans residues 137–174; that stretch reads LFYTAILHFSGGELMVTGPFATAGIFATYLPDHMTLWR. Residues 175-192 traverse the membrane as a helical segment; that stretch reads GFLNEEWLTRMLQLCLFT. At 193–204 the chain is on the cytoplasmic side; the sequence is ITDQENNPALPG. A helical membrane pass occupies residues 205 to 221; sequence THALVISILVVIIRVSH. Residues 222–225 lie on the Extracellular side of the membrane; the sequence is GINT. The discontinuously helical intramembrane region spans 226 to 239; that stretch reads GYAINPSRDPPPSI. The short motif at 230–232 is the NPA 2 element; sequence NPS. Topologically, residues 240 to 257 are extracellular; sequence FTFIAGWGKQVFSDGENW. Residues 258 to 279 traverse the membrane as a helical segment; it reads WWVPVVAPLLGASLGGIIYLVF. Residues 280–346 are Cytoplasmic-facing; sequence IGSTIPREPL…LHESMALEHF (67 aa).

The protein belongs to the MIP/aquaporin (TC 1.A.8) family. As to quaternary structure, homotetramer; each monomer provides an independent glycerol/water pore.

Its subcellular location is the membrane. The catalysed reaction is glycerol(in) = glycerol(out). It catalyses the reaction H2O(in) = H2O(out). Functionally, aquaglyceroporins form homotetrameric transmembrane channels, with each monomer independently mediating glycerol and water transport across the plasma membrane along their osmotic gradient. The protein is Putative aquaporin-7B of Homo sapiens (Human).